A 309-amino-acid chain; its full sequence is MKIYLDVIWLLNFCFDALLLLLTAFILKRHVKKRRLVGGAFIGSSIVLLMFTPFSPIVEHPAGKLAFSVVIVVVTFGFKRFRFFFQNLFSFYFATFLMGGGIIGAHSLLQSNSIVQNGVMITNQTGFGDPISWLFIVGGFPALWFFSKRRIEDIETKNIQYEERVSVQADLGSQTLHVRGLIDSGNQLYDPLTKTPVMIIYIDKLEPIFGTAETMIIRNTDPLEAIEQLDDSFRFLDKMRLIPYRGVGQQNQFLLCVKPDHVTIMTKEEMISADKCLIGISTTKLSADGEFDAIIHPKMLSGKAVKHVS.

5 helical membrane-spanning segments follow: residues 7–27, 36–55, 61–78, 88–105, and 130–147; these read VIWL…AFIL, LVGG…TPFS, PAGK…TFGF, LFSF…IIGA, and PISW…WFFS. Residue Asp183 is part of the active site.

This sequence belongs to the peptidase U4 family. Self-associates. Interacts with SigE. Interacts with SpoIIR.

It is found in the cell membrane. In terms of biological role, probable aspartic protease that is responsible for the proteolytic cleavage of the RNA polymerase sigma E factor (SigE/spoIIGB) to yield the active peptide in the mother cell during sporulation. Responds to a signal from the forespore that is triggered by the extracellular signal protein SpoIIR. The protein is Sporulation sigma-E factor-processing peptidase (spoIIGA) of Bacillus subtilis (strain 168).